A 660-amino-acid polypeptide reads, in one-letter code: Septation initiation protein sid4 (660 aa).

3 disordered regions span residues 79-243, 368-396, and 459-503; these read TKKE…QQHF, STTV…PDTK, and RHTS…PAKN. Composition is skewed to polar residues over residues 125–138, 156–176, and 222–243; these read SFNS…STPY, SNSP…QSPK, and RPNQ…QQHF. A compositionally biased stretch (basic and acidic residues) spans 384–396; it reads STKDFKEQKPDTK. Polar residues-rich tracts occupy residues 459-480 and 488-497; these read RHTS…ITTK and KENTMLNDGS.

In terms of assembly, homodimer. Interacts with cdc11, sad1, plo1 and dma1.

Its subcellular location is the cytoplasm. The protein localises to the cytoskeleton. It is found in the microtubule organizing center. The protein resides in the spindle pole body. Functionally, required for activation of the spg1 GTPase signaling cascade which leads to the initiation of septation and the subsequent termination of mitosis. May act as a scaffold at the spindle pole body to which other components of the spg1 signaling cascade attach. The sequence is that of Septation initiation protein sid4 (sid4) from Schizosaccharomyces pombe (strain 972 / ATCC 24843) (Fission yeast).